We begin with the raw amino-acid sequence, 546 residues long: CTP synthase (546 aa).

Residues 1-269 are amidoligase domain; it reads MNSNTKIIFV…DAKLVELLNL (269 aa). Ser16 lines the CTP pocket. Position 16 (Ser16) interacts with UTP. Residues 17–22 and Asp74 contribute to the ATP site; that span reads SLGKGV. Mg(2+)-binding residues include Asp74 and Glu143. CTP contacts are provided by residues 150 to 152, 190 to 195, and Lys226; these read DIE and KTKPTQ. Residues 190–195 and Lys226 contribute to the UTP site; that span reads KTKPTQ. Residues 294–546 enclose the Glutamine amidotransferase type-1 domain; it reads TIAMVGKYVS…IQAAIENSNN (253 aa). Gly356 contributes to the L-glutamine binding site. The Nucleophile; for glutamine hydrolysis role is filled by Cys383. L-glutamine-binding positions include 384–387, Glu407, and Arg474; that span reads LGMQ. Catalysis depends on residues His519 and Glu521.

This sequence belongs to the CTP synthase family. Homotetramer.

The enzyme catalyses UTP + L-glutamine + ATP + H2O = CTP + L-glutamate + ADP + phosphate + 2 H(+). It carries out the reaction L-glutamine + H2O = L-glutamate + NH4(+). The catalysed reaction is UTP + NH4(+) + ATP = CTP + ADP + phosphate + 2 H(+). It participates in pyrimidine metabolism; CTP biosynthesis via de novo pathway; CTP from UDP: step 2/2. Its activity is regulated as follows. Allosterically activated by GTP, when glutamine is the substrate; GTP has no effect on the reaction when ammonia is the substrate. The allosteric effector GTP functions by stabilizing the protein conformation that binds the tetrahedral intermediate(s) formed during glutamine hydrolysis. Inhibited by the product CTP, via allosteric rather than competitive inhibition. Catalyzes the ATP-dependent amination of UTP to CTP with either L-glutamine or ammonia as the source of nitrogen. Regulates intracellular CTP levels through interactions with the four ribonucleotide triphosphates. This is CTP synthase from Francisella tularensis subsp. tularensis (strain FSC 198).